The primary structure comprises 315 residues: Salivary protein SG34 (315 aa).

An N-terminal signal peptide occupies residues 1-20 (MPVSYDFVILLALFIVLARS). A coiled-coil region spans residues 98–161 (NAEVELLRES…QEEIEQQTKQ (64 aa)).

(Microbial infection) Modulates replication of duck Tembusu virus in salivary glands and virus release into the saliva, probably via the regulation of antimicrobial peptides expression in response to duck Tembusu virus infection. The protein is Salivary protein SG34 of Aedes albopictus (Asian tiger mosquito).